We begin with the raw amino-acid sequence, 203 residues long: NADH-ubiquinone oxidoreductase chain 6 (203 aa).

Transmembrane regions (helical) follow at residues 16-36 (SNILDILAFISIILGIYTIVS), 40-60 (VVSVLFLIGLFSTISIYLIMI), 70-90 (LLVYIGAVSILFLFILMLINI), 102-122 (YIPLAILSMITLVYILGQKII), and 179-199 (WLIIISLILLLAMVGSIVISI).

This sequence belongs to the complex I subunit 6 family.

It is found in the mitochondrion membrane. It catalyses the reaction a ubiquinone + NADH + 5 H(+)(in) = a ubiquinol + NAD(+) + 4 H(+)(out). Its function is as follows. Core subunit of the mitochondrial membrane respiratory chain NADH dehydrogenase (Complex I) that is believed to belong to the minimal assembly required for catalysis. Complex I functions in the transfer of electrons from NADH to the respiratory chain. The immediate electron acceptor for the enzyme is believed to be ubiquinone. The polypeptide is NADH-ubiquinone oxidoreductase chain 6 (ND6) (Trichophyton rubrum (Athlete's foot fungus)).